The chain runs to 204 residues: Terpene cyclase trt1 (204 aa).

5 helical membrane-spanning segments follow: residues 44–64, 67–87, 103–122, 132–154, and 169–189; these read FMSICCDVAWEFVYAFVYPIA, HWAGGIRIWFAMHCVMLFIVA, FARLAYVAITIGFMAGHLAL, FFWSGALCQITASLGSLCLLVCR, and WFYIAITLTLDAIYPVFFFYF.

This sequence belongs to the paxB family.

Its subcellular location is the membrane. It participates in secondary metabolite biosynthesis; terpenoid biosynthesis. Functionally, terpene cyclase; part of the gene cluster that mediates the biosynthesis of terretonin, a fungal meroterpenoid that acts as a mycotoxin. The first step of the pathway is the synthesis of 3,5-dimethylorsellinic acid (DMOA) by the polyketide synthase trt4. DMOA is then prenylated into farnesyl-DMOA by the polyprenyl transferase trt2. Methylation by the methyltransferase trt5 then leads to farnesyl-DMOA methyl ester which is further subject to epoxidation by the FAD-dependent monooxygenase trt8 to yield epoxyfarnesyl-DMOA methyl ester. Cyclization of epoxyfarnesyl-DMOA methyl ester by the terpene cyclase trt1 leads to a tetracycle intermediate which is in turn converted to preterretonin. Dehydrogenase trt9 comes next to transform preterretonin to preterrenoid. The FAD-dependent monooxygenase trt3 is then required for the C-hydroxylation at C16 of preterrenoid to yield terrenoid. The cytochrome P450 trt6 catalyzes three successive oxidations to transform terrenoid into an unstable intermediate, which then undergoes the D-ring expansion and unusual rearrangement of the methoxy group to afford the core skeleton of terretonin. Trt14 catalyzes the D-ring expansion of terretonin involving intramolecular methoxy rearrangement as well as the hydrolysis of the expanded D-ring and the methyl ester moiety. Finally, the nonheme iron-dependent dioxygenase trt7 accomplishes the last two oxidation reactions steps to complete the biosynthesis of terretonin. Terretonin C is produced via spontaneous decarboxylation of the terretonin precursor. Another shunt product of the terretonin biosynthesis is dihydrofarnesyl-DMOA, derived from epoxyfarnesyl-DMOA through hydrolysis of the epoxide. The polypeptide is Terpene cyclase trt1 (Aspergillus terreus (strain NIH 2624 / FGSC A1156)).